We begin with the raw amino-acid sequence, 407 residues long: Putative two-component response regulator ARR19 (407 aa).

The Response regulatory domain occupies 35-150 (NVLVVDTNFT…VMANIWQHIV (116 aa)). Asp-86 is modified (4-aspartylphosphate). The Nuclear localization signal motif lies at 214–217 (RKPR). Positions 217–271 (RMTWTEELHQKFLEAIEIIGGIEKANPKVLVECLQEMRIEGITRSNVASHLQKHR) form a DNA-binding region, myb-like GARP.

The protein belongs to the ARR family. Type-B subfamily. In terms of assembly, binds the target DNA as a monomer. Post-translationally, two-component system major event consists of a His-to-Asp phosphorelay between a sensor histidine kinase (HK) and a response regulator (RR). In plants, the His-to-Asp phosphorelay involves an additional intermediate named Histidine-containing phosphotransfer protein (HPt). This multistep phosphorelay consists of a His-Asp-His-Asp sequential transfer of a phosphate group between first a His and an Asp of the HK protein, followed by the transfer to a conserved His of the HPt protein and finally the transfer to an Asp in the receiver domain of the RR protein. As to expression, detected in trichomes and siliques.

The protein localises to the nucleus. Its function is as follows. Putative transcriptional activator that binds specifically to the DNA sequence 5'-[AG]GATT-3'. Functions as a response regulator involved in His-to-Asp phosphorelay signal transduction system. Phosphorylation of the Asp residue in the receiver domain activates the ability of the protein to promote the transcription of target genes. Could directly activate some type-A response regulators in response to cytokinins. The sequence is that of Putative two-component response regulator ARR19 (ARR19) from Arabidopsis thaliana (Mouse-ear cress).